We begin with the raw amino-acid sequence, 715 residues long: Inducible lysine decarboxylase (715 aa).

Lys367 is modified (N6-(pyridoxal phosphate)lysine).

Belongs to the Orn/Lys/Arg decarboxylase class-I family. Homodecamer. Interacts with RavA. Requires pyridoxal 5'-phosphate as cofactor.

It is found in the cytoplasm. It carries out the reaction L-lysine + H(+) = cadaverine + CO2. In Escherichia coli O157:H7, this protein is Inducible lysine decarboxylase (cadA).